The primary structure comprises 251 residues: Putative fatty acid elongase DDB_G0274669 (251 aa).

Transmembrane regions (helical) follow at residues 51–71 (FQIIPIVLVIYLVTIFSIKFL), 82–102 (FISILHNAILCIWSLIMCVGV), 135–155 (WSYIFYISKFYELLDTVIIVL), 177–197 (YITMIQILQFVCLGIAGVLHV), and 211–231 (AFAAAYSINFSFLFLFSKFFV).

The protein belongs to the ELO family.

The protein resides in the membrane. The enzyme catalyses a very-long-chain acyl-CoA + malonyl-CoA + H(+) = a very-long-chain 3-oxoacyl-CoA + CO2 + CoA. Could be implicated in synthesis of very long chain fatty acids. The protein is Putative fatty acid elongase DDB_G0274669 of Dictyostelium discoideum (Social amoeba).